A 207-amino-acid chain; its full sequence is High frequency lysogenization protein HflD homolog (207 aa).

Belongs to the HflD family.

Its subcellular location is the cytoplasm. The protein resides in the cell inner membrane. The sequence is that of High frequency lysogenization protein HflD homolog from Tolumonas auensis (strain DSM 9187 / NBRC 110442 / TA 4).